The chain runs to 85 residues: Putative membrane protein insertion efficiency factor (85 aa).

The protein belongs to the UPF0161 family.

It localises to the cell inner membrane. Its function is as follows. Could be involved in insertion of integral membrane proteins into the membrane. The polypeptide is Putative membrane protein insertion efficiency factor (Phenylobacterium zucineum (strain HLK1)).